A 575-amino-acid polypeptide reads, in one-letter code: Triokinase/FMN cyclase (575 aa).

In terms of domain architecture, DhaK spans 9-336 (SVAGCADDAL…IDAETTAAAW (328 aa)). Dihydroxyacetone is bound by residues 56 to 59 (GSGH), K109, and D114. H221 (tele-hemiaminal-histidine intermediate) is an active-site residue. The interval 348-367 (KRSRVAPAEPQEAPDSTAAG) is disordered. Position 350 is a phosphoserine (S350). The 200-residue stretch at 372 to 571 (KRMALVLERV…AAAILRAILE (200 aa)) folds into the DhaL domain. Residues 401-404 (DGDC), 446-447 (SS), G486, and 494-495 (TM) each bind ATP. A phosphoserine mark is found at S511 and S545. 556–558 (DPG) lines the ATP pocket.

It belongs to the dihydroxyacetone kinase (DAK) family. In terms of assembly, homodimer. Interacts with IFIH1 (via the CARD domains), the interaction is inhibited by viral infection. Mg(2+) serves as cofactor. It depends on Mn(2+) as a cofactor. Requires Co(2+) as cofactor. In terms of tissue distribution, detected in erythrocytes (at protein level).

The catalysed reaction is dihydroxyacetone + ATP = dihydroxyacetone phosphate + ADP + H(+). It carries out the reaction D-glyceraldehyde + ATP = D-glyceraldehyde 3-phosphate + ADP + H(+). It catalyses the reaction FAD = riboflavin cyclic-4',5'-phosphate + AMP + H(+). Its activity is regulated as follows. Each activity is inhibited by the substrate(s) of the other. Catalyzes both the phosphorylation of dihydroxyacetone and of glyceraldehyde, and the splitting of ribonucleoside diphosphate-X compounds among which FAD is the best substrate. Represses IFIH1-mediated cellular antiviral response. This is Triokinase/FMN cyclase from Homo sapiens (Human).